The chain runs to 181 residues: ATP synthase subunit delta (181 aa).

It belongs to the ATPase delta chain family. As to quaternary structure, F-type ATPases have 2 components, F(1) - the catalytic core - and F(0) - the membrane proton channel. F(1) has five subunits: alpha(3), beta(3), gamma(1), delta(1), epsilon(1). F(0) has three main subunits: a(1), b(2) and c(10-14). The alpha and beta chains form an alternating ring which encloses part of the gamma chain. F(1) is attached to F(0) by a central stalk formed by the gamma and epsilon chains, while a peripheral stalk is formed by the delta and b chains.

It localises to the cell membrane. Its function is as follows. F(1)F(0) ATP synthase produces ATP from ADP in the presence of a proton or sodium gradient. F-type ATPases consist of two structural domains, F(1) containing the extramembraneous catalytic core and F(0) containing the membrane proton channel, linked together by a central stalk and a peripheral stalk. During catalysis, ATP synthesis in the catalytic domain of F(1) is coupled via a rotary mechanism of the central stalk subunits to proton translocation. Functionally, this protein is part of the stalk that links CF(0) to CF(1). It either transmits conformational changes from CF(0) to CF(1) or is implicated in proton conduction. The chain is ATP synthase subunit delta from Mycoplasma mycoides subsp. mycoides SC (strain CCUG 32753 / NCTC 10114 / PG1).